Consider the following 236-residue polypeptide: SSTGFSLQAMDSSHVALVALLLRSEGFEHYRCDRNISMGMNLNNMAKMLKCAGNDDIITIKADDGSDTVTFMFESPTQDKISDFEMKLMDIDSEHLGIPEAEYHAIVKMPSSEFARICKDLSSIGDTVVISVTKEGVKFSTKGDIGTANIVCRQNTSVDKPEEATVIEMNEPVSLTFALRYMNSFTKATPLSNTVTISLSNELPVVVEYKIAEMGYVRFYLAPKIEEDEEDTKPQV.

The DNA-binding element occupies arginine 31–lysine 50.

This sequence belongs to the PCNA family.

Its subcellular location is the nucleus. In terms of biological role, this protein is an auxiliary protein of DNA polymerase delta and is involved in the control of eukaryotic DNA replication by increasing the polymerase's processibility during elongation of the leading strand. This Glycine max (Soybean) protein is Proliferating cell nuclear antigen.